The sequence spans 950 residues: Coiled-coil domain-containing protein 80 (950 aa).

Positions 1 to 21 (MTWRMGPRFTMLLAMWLVCGS) are cleaved as a signal peptide. Disordered stretches follow at residues 28–64 (TIRG…IERS), 88–119 (PTEP…EMIR), and 289–609 (QVVA…QSPK). 2 stretches are compositionally biased toward basic and acidic residues: residues 104 to 119 (PEQR…EMIR) and 308 to 317 (SEKKKEDPRR). Positions 348–374 (PRATTLPPAPATTVTRSTSRAVTVAAR) are enriched in low complexity. Residues 376 to 385 (MTTTAFPTTQ) show a composition bias toward polar residues. The span at 418-428 (SRKDQHRERPQ) shows a compositional bias: basic and acidic residues. The segment covering 435–454 (KATSLESFTNAPPTTISEPS) has biased composition (polar residues). 3 stretches are compositionally biased toward basic and acidic residues: residues 462-478 (RFRD…HRDP), 487-499 (PAKE…KAQD), and 538-582 (KKHE…EKEK). Glycyl lysine isopeptide (Lys-Gly) (interchain with G-Cter in SUMO2) cross-links involve residues Lys-545 and Lys-548. A coiled-coil region spans residues 560–587 (DKLLKSEKQMKKSEKKSKQEKEKSKKKK). Residues 598–609 (KPTNKHFTQSPK) show a composition bias toward polar residues.

Belongs to the CCDC80 family. In terms of assembly, binds to various extracellular matrix proteins. Phosphorylated. In terms of tissue distribution, expressed in dermal papilla and dermal fibroblasts (at protein level). Expressed in heart, thymus, placenta, pancreas, colon, epithelium, spleen and osteoblasts.

The protein resides in the secreted. The protein localises to the extracellular space. It localises to the extracellular matrix. Its function is as follows. Promotes cell adhesion and matrix assembly. The polypeptide is Coiled-coil domain-containing protein 80 (CCDC80) (Homo sapiens (Human)).